A 206-amino-acid chain; its full sequence is Putative apoptosis inhibitor 021L (206 aa).

The segment covering 95 to 105 (TSKSPVSNQPS) has biased composition (polar residues). The disordered stretch occupies residues 95 to 114 (TSKSPVSNQPSPEEDEPIPD). The segment at 157 to 195 (CVVCQANVRNVVFVPCNHLATCISCSANPLMPKKCPMCR) adopts an RING-type zinc-finger fold.

This sequence belongs to the IIV-6 193R family.

Its function is as follows. Plays a role early in infection by preventing host cell apoptosis. The protein is Putative apoptosis inhibitor 021L of Aedes vexans (Inland floodwater mosquito).